The sequence spans 334 residues: H-2 class I histocompatibility antigen, Q7 alpha chain (334 aa).

The N-terminal stretch at 1 to 21 is a signal peptide; the sequence is MALTMLLLLVAAALTLIETRA. Positions 22–111 are alpha-1; it reads GQHSLQYFHT…AQSYYNQSKG (90 aa). Residues 22-310 lie on the Extracellular side of the membrane; that stretch reads GQHSLQYFHT…PPYTVSNMAT (289 aa). N-linked (GlcNAc...) asparagine glycosylation occurs at N107. The interval 112-203 is alpha-2; that stretch reads GSHTLQWMYG…QLGKETLLRT (92 aa). 2 disulfide bridges follow: C122–C185 and C224–C280. The segment at 204 to 295 is alpha-3; it reads DPPKAHVTHH…GLPEPLTLRW (92 aa). The region spanning 206–294 is the Ig-like C1-type domain; the sequence is PKAHVTHHPR…EGLPEPLTLR (89 aa). N277 carries an N-linked (GlcNAc...) asparagine glycan. The tract at residues 296-310 is connecting peptide; that stretch reads GRWEPPPYTVSNMAT. Residues 311–332 form a helical membrane-spanning segment; the sequence is IAVVVDLGAVAIIGAVVAFVMN.

The protein belongs to the MHC class I family. As to quaternary structure, heterodimer of an alpha chain and a beta chain (beta-2-microglobulin).

It is found in the membrane. Functionally, involved in the presentation of foreign antigens to the immune system. This Mus musculus (Mouse) protein is H-2 class I histocompatibility antigen, Q7 alpha chain (H2-Q7).